The sequence spans 861 residues: ToMV resistant protein Tm-2 netted virescent (861 aa).

Positions 63-83 (VKNLLKDIQELAGDVEDLLDD) form a coiled coil. Residues 162 to 388 (DDFNMLQAKL…LESMGHKVQD (227 aa)) enclose the NB-ARC domain. 185-192 (GMPGLGKT) contacts ATP. LRR repeat units lie at residues 225 to 248 (LDIAKQIGLTEQKMKENLEDNLRS), 305 to 327 (LHALQPLESEKSFELFTKKIFNF), 388 to 411 (DGCAKVLALSYNDLPIASRPCFLY), 449 to 472 (LAEDVLNDLVSRNLIQLAKRTYNG), 510 to 536 (VARLRRITFYSDNVMIEFFRSNPKLEK), 585 to 608 (MTCLRYLRLEGNICGKLPNSIVKL), 609 to 631 (TRLETIDIDRRSLIQPPSGVWES), 652 to 680 (ISSFYPNIYSLHPNNLQTLMWIPDKFFEP), 689 to 710 (LRKLGILGVSNSTVKMLSIFSP), 712 to 735 (LKALEVLKLSFSSDPSEQIKLSSY), 736 to 758 (PHIAKLHLNVNRTMALNSQSFPP), 784 to 807 (LRKLKMFICKYNEEKMALSGEANG), and 810 to 835 (FPQLEVLHIHSPNGLSEVTCTDDVSM).

This sequence belongs to the disease resistance NB-LRR family. As to quaternary structure, (Microbial infection) Interacts with tobamoviruses mouvement protein at the plasma membrane; this interaction triggers defense responses leading to programmed cell death. In terms of assembly, binds to HSP90 proteins; this interaction seems required for defense responses toward tobamoviruses.

Its subcellular location is the cell membrane. Its function is as follows. Inhibitor of viral mouvements which confers resistance to some tobamoviruses including tomato mosaic virus (ToMV) (e.g. isolate L and W3) and tobacco mosaic virus (TMV), but not to resistance-breaking isolates (e.g. Ltbl) ToMV and tomato brown rugose fruit virus (ToBRFV). Elicits a hypersensitive reaction in response to avirulent (Avr) movement proteins from resistance inducing tobamoviruses (e.g. ToMV and TMV) strains, thus leading to programmed cell death. The polypeptide is ToMV resistant protein Tm-2 netted virescent (Solanum lycopersicum (Tomato)).